Consider the following 423-residue polypeptide: Gamma-glutamyl phosphate reductase (423 aa).

This sequence belongs to the gamma-glutamyl phosphate reductase family.

The protein resides in the cytoplasm. The catalysed reaction is L-glutamate 5-semialdehyde + phosphate + NADP(+) = L-glutamyl 5-phosphate + NADPH + H(+). It participates in amino-acid biosynthesis; L-proline biosynthesis; L-glutamate 5-semialdehyde from L-glutamate: step 2/2. In terms of biological role, catalyzes the NADPH-dependent reduction of L-glutamate 5-phosphate into L-glutamate 5-semialdehyde and phosphate. The product spontaneously undergoes cyclization to form 1-pyrroline-5-carboxylate. The polypeptide is Gamma-glutamyl phosphate reductase (Burkholderia ambifaria (strain ATCC BAA-244 / DSM 16087 / CCUG 44356 / LMG 19182 / AMMD) (Burkholderia cepacia (strain AMMD))).